We begin with the raw amino-acid sequence, 319 residues long: Iron-sulfur cluster transfer protein NUBPL (319 aa).

Residues 1-38 (MGTWRRLLLFGGVSLRGGGAATVPPRGCRALGCGRQLL) constitute a mitochondrion transit peptide. 75–82 (GKGGVGKS) contributes to the ATP binding site.

Belongs to the Mrp/NBP35 ATP-binding proteins family. [4Fe-4S] cluster serves as cofactor.

The protein localises to the mitochondrion. Its function is as follows. Iron-sulfur cluster transfer protein involved in the assembly of the mitochondrial membrane respiratory chain NADH dehydrogenase (Complex I). May deliver one or more Fe-S clusters to complex I subunits. This chain is Iron-sulfur cluster transfer protein NUBPL (Nubpl), found in Mus musculus (Mouse).